A 666-amino-acid polypeptide reads, in one-letter code: Endogenous retrovirus group K member 19 Gag polyprotein (666 aa).

The N-myristoyl glycine moiety is linked to residue G2. Disordered stretches follow at residues 170-189 (LVGP…AGQV) and 223-264 (PLES…GSEL). The span at 232 to 247 (GMPPAPQGRAPYPQPP) shows a compositional bias: pro residues. 2 consecutive CCHC-type zinc fingers follow at residues 544–561 (GKCY…NCPV) and 580–597 (DLCP…QCRS). The segment at 598–640 (KFDKNGQPLSGNEQRGQPQAPQQTGAFPIQPFVPHGFQGQQPP) is disordered. Polar residues predominate over residues 604-622 (QPLSGNEQRGQPQAPQQTG).

The protein belongs to the beta type-B retroviral Gag protein family. HERV class-II K(HML-2) gag subfamily. Myristoylation is essential for retroviral assembly. Alteration of the glycine residue leads to a block in the budding of particles and an accumulation of Gag inside the cell. In terms of processing, specific enzymatic cleavages may yield mature proteins.

Its subcellular location is the cell membrane. Functionally, the products of the Gag polyproteins of infectious retroviruses perform highly complex orchestrated tasks during the assembly, budding, maturation, and infection stages of the viral replication cycle. During viral assembly, the proteins form membrane associations and self-associations that ultimately result in budding of an immature virion from the infected cell. Gag precursors also function during viral assembly to selectively bind and package two plus strands of genomic RNA. Endogenous Gag proteins may have kept, lost or modified their original function during evolution. The chain is Endogenous retrovirus group K member 19 Gag polyprotein (ERVK-19) from Homo sapiens (Human).